A 337-amino-acid polypeptide reads, in one-letter code: Holliday junction branch migration complex subunit RuvB (337 aa).

The large ATPase domain (RuvB-L) stretch occupies residues 4–184 (QDRIISAELK…FGIVQRLEFY (181 aa)). ATP contacts are provided by residues I23, R24, G65, K68, T69, T70, 131 to 133 (EDY), R174, Y184, and R221. T69 is a Mg(2+) binding site. The interval 185–255 (DVESLTTIVA…VAQRALDMLS (71 aa)) is small ATPAse domain (RuvB-S). Positions 258 to 337 (SQGFDHLDRR…FNYQLPSDFK (80 aa)) are head domain (RuvB-H). DNA-binding residues include R313 and R318.

Belongs to the RuvB family. Homohexamer. Forms an RuvA(8)-RuvB(12)-Holliday junction (HJ) complex. HJ DNA is sandwiched between 2 RuvA tetramers; dsDNA enters through RuvA and exits via RuvB. An RuvB hexamer assembles on each DNA strand where it exits the tetramer. Each RuvB hexamer is contacted by two RuvA subunits (via domain III) on 2 adjacent RuvB subunits; this complex drives branch migration. In the full resolvosome a probable DNA-RuvA(4)-RuvB(12)-RuvC(2) complex forms which resolves the HJ.

It is found in the cytoplasm. The catalysed reaction is ATP + H2O = ADP + phosphate + H(+). Its function is as follows. The RuvA-RuvB-RuvC complex processes Holliday junction (HJ) DNA during genetic recombination and DNA repair, while the RuvA-RuvB complex plays an important role in the rescue of blocked DNA replication forks via replication fork reversal (RFR). RuvA specifically binds to HJ cruciform DNA, conferring on it an open structure. The RuvB hexamer acts as an ATP-dependent pump, pulling dsDNA into and through the RuvAB complex. RuvB forms 2 homohexamers on either side of HJ DNA bound by 1 or 2 RuvA tetramers; 4 subunits per hexamer contact DNA at a time. Coordinated motions by a converter formed by DNA-disengaged RuvB subunits stimulates ATP hydrolysis and nucleotide exchange. Immobilization of the converter enables RuvB to convert the ATP-contained energy into a lever motion, pulling 2 nucleotides of DNA out of the RuvA tetramer per ATP hydrolyzed, thus driving DNA branch migration. The RuvB motors rotate together with the DNA substrate, which together with the progressing nucleotide cycle form the mechanistic basis for DNA recombination by continuous HJ branch migration. Branch migration allows RuvC to scan DNA until it finds its consensus sequence, where it cleaves and resolves cruciform DNA. This is Holliday junction branch migration complex subunit RuvB from Marinomonas sp. (strain MWYL1).